The chain runs to 131 residues: Arsenate reductase 2 (131 aa).

Catalysis depends on nucleophile residues Cys10, Cys82, and Cys89. Intrachain disulfides connect Cys10-Cys82 and Cys82-Cys89.

Belongs to the low molecular weight phosphotyrosine protein phosphatase family. Thioredoxin-coupled ArsC subfamily.

It is found in the cytoplasm. The catalysed reaction is arsenate + [thioredoxin]-dithiol + H(+) = arsenite + [thioredoxin]-disulfide + H2O. Catalyzes the reduction of arsenate [As(V)] to arsenite [As(III)]. This chain is Arsenate reductase 2, found in Staphylococcus haemolyticus (strain JCSC1435).